The following is a 149-amino-acid chain: Ribonuclease H (149 aa).

The 142-residue stretch at 1–142 (MSTITIHTDG…ADELAREGLA (142 aa)) folds into the RNase H type-1 domain. Mg(2+) contacts are provided by D9, E47, D70, and D134. The interval 124–149 (HAGDPGNERADELAREGLAEARGRQP) is disordered. A compositionally biased stretch (basic and acidic residues) spans 129–149 (GNERADELAREGLAEARGRQP).

Belongs to the RNase H family. In terms of assembly, monomer. Mg(2+) is required as a cofactor.

It is found in the cytoplasm. It carries out the reaction Endonucleolytic cleavage to 5'-phosphomonoester.. Endonuclease that specifically degrades the RNA of RNA-DNA hybrids. In Maricaulis maris (strain MCS10) (Caulobacter maris), this protein is Ribonuclease H.